We begin with the raw amino-acid sequence, 483 residues long: Glutamyl-tRNA(Gln) amidotransferase subunit A (483 aa).

Active-site charge relay system residues include Lys77 and Ser152. The Acyl-ester intermediate role is filled by Ser176.

The protein belongs to the amidase family. GatA subfamily. As to quaternary structure, heterotrimer of A, B and C subunits.

It carries out the reaction L-glutamyl-tRNA(Gln) + L-glutamine + ATP + H2O = L-glutaminyl-tRNA(Gln) + L-glutamate + ADP + phosphate + H(+). Allows the formation of correctly charged Gln-tRNA(Gln) through the transamidation of misacylated Glu-tRNA(Gln) in organisms which lack glutaminyl-tRNA synthetase. The reaction takes place in the presence of glutamine and ATP through an activated gamma-phospho-Glu-tRNA(Gln). The chain is Glutamyl-tRNA(Gln) amidotransferase subunit A from Shouchella clausii (strain KSM-K16) (Alkalihalobacillus clausii).